The chain runs to 630 residues: Chaperone protein HtpG (630 aa).

Positions 1–339 are a; substrate-binding; sequence MKGQETRGFQ…SNDLPLNVSR (339 aa). The b stretch occupies residues 340-555; the sequence is EILQDNSITR…VDEMSTQMAK (216 aa). Residues 556–630 form a c region; it reads LFAAAGQQVP…MNQLLLSEKA (75 aa).

The protein belongs to the heat shock protein 90 family. Homodimer.

It localises to the cytoplasm. Functionally, molecular chaperone. Has ATPase activity. This chain is Chaperone protein HtpG, found in Photorhabdus laumondii subsp. laumondii (strain DSM 15139 / CIP 105565 / TT01) (Photorhabdus luminescens subsp. laumondii).